The sequence spans 204 residues: Ribosome maturation factor RimP (204 aa).

This sequence belongs to the RimP family.

The protein localises to the cytoplasm. In terms of biological role, required for maturation of 30S ribosomal subunits. The protein is Ribosome maturation factor RimP of Albidiferax ferrireducens (strain ATCC BAA-621 / DSM 15236 / T118) (Rhodoferax ferrireducens).